The following is a 198-amino-acid chain: Probable GTP-binding protein EngB (198 aa).

The region spanning 22 to 196 (NLSEIAFVGR…WNWIKGQAEL (175 aa)) is the EngB-type G domain. GTP-binding positions include 30-37 (GRSNVGKS), 57-61 (GKTQT), 75-78 (DVPG), 142-145 (TKAD), and 175-177 (FSA). Positions 37 and 59 each coordinate Mg(2+).

The protein belongs to the TRAFAC class TrmE-Era-EngA-EngB-Septin-like GTPase superfamily. EngB GTPase family. It depends on Mg(2+) as a cofactor.

In terms of biological role, necessary for normal cell division and for the maintenance of normal septation. In Oenococcus oeni (strain ATCC BAA-331 / PSU-1), this protein is Probable GTP-binding protein EngB.